The primary structure comprises 453 residues: uncharacterized protein (453 aa).

This is an uncharacterized protein from Galliformes (FAdV-1).